A 330-amino-acid polypeptide reads, in one-letter code: DNA-directed RNA polymerase subunit alpha (330 aa).

The segment at 1–236 is alpha N-terminal domain (alpha-NTD); that stretch reads MQGSVTEFLK…EQLDAFVDLR (236 aa). The segment at 250–330 is alpha C-terminal domain (alpha-CTD); the sequence is FDPILLRPVD…NWPPASIAED (81 aa).

This sequence belongs to the RNA polymerase alpha chain family. As to quaternary structure, homodimer. The RNAP catalytic core consists of 2 alpha, 1 beta, 1 beta' and 1 omega subunit. When a sigma factor is associated with the core the holoenzyme is formed, which can initiate transcription.

It carries out the reaction RNA(n) + a ribonucleoside 5'-triphosphate = RNA(n+1) + diphosphate. Functionally, DNA-dependent RNA polymerase catalyzes the transcription of DNA into RNA using the four ribonucleoside triphosphates as substrates. This chain is DNA-directed RNA polymerase subunit alpha, found in Vibrio campbellii (strain ATCC BAA-1116).